Consider the following 562-residue polypeptide: Probable malate:quinone oxidoreductase (562 aa).

The disordered stretch occupies residues 535-562 (SATPADPTIAPKNQHSTTYNANSEMQAL). The span at 545-562 (PKNQHSTTYNANSEMQAL) shows a compositional bias: polar residues.

Belongs to the MQO family. Requires FAD as cofactor.

It catalyses the reaction (S)-malate + a quinone = a quinol + oxaloacetate. The protein operates within carbohydrate metabolism; tricarboxylic acid cycle; oxaloacetate from (S)-malate (quinone route): step 1/1. The sequence is that of Probable malate:quinone oxidoreductase from Xylella fastidiosa (strain M23).